The sequence spans 519 residues: MHFIYRVVLVLAAFALFKVDSISAGVTFNEEHLTIPRFTRPVEENLIKRQLRVMDDNERGFPSGPSLEKIEAMFQSLTNKITTKSKPSQRDVPDEKLSQLLGAAKPVNKAVEAAGRLKTLQTQKWLDEGKSTQEVFQLLELNKFMVPNFKKIEGTVFGLPDFNTWVNYVDDFNAKNPTKKESMIPTLRTIYSDEGLTRALELAKTYSTTNALATKLRKEQIQRWLDDAQTPKYVFEMFMIDDKVDGLLTNPRFIAWTKYVDDFNLQYPTSRASMEPPIAAHYGDDAVFAMLEAAKKVQLTENVASRLQAEQIKRLLNSNRSPEYVFEAFNLHETGDNLLSTPMFKTWFNYLESFNKKNTDKETLLAPIHRYYHDHGVAKIVAEGMKNPSTVELSKQLQIQRYKRWLHAERPPRDAFNTFILEKPGADVIIRYNERLDGKLYQVRLNKVSDGLLSSPEFQLWSKYLDDWNTKYPDQKQSMAKIFQALFTEDALAKMIMAARNNPSTQKIASLLENAFAKV.

Positions 1–24 are cleaved as a signal peptide; it reads MHFIYRVVLVLAAFALFKVDSISA. Residues 49 to 59 carry the RxLR-dEER motif; it reads RQLRVMDDNER.

Belongs to the RxLR effector family.

It localises to the secreted. The protein localises to the host cytoplasm. In terms of biological role, effector that enhances P.infestans colonization of Nicotiana benthamiana leaves. This Phytophthora infestans (strain T30-4) (Potato late blight agent) protein is RxLR effector protein PITG_15278.